Consider the following 389-residue polypeptide: S-adenosylmethionine synthase 2 (389 aa).

His17 provides a ligand contact to ATP. Mg(2+) is bound at residue Asp19. Glu45 serves as a coordination point for K(+). Positions 58 and 102 each coordinate L-methionine. Positions 102-112 (QSADIAVGVDA) are flexible loop. Residues 166-168 (DSK), 231-232 (RF), Asp240, 246-247 (RK), Ala263, and Lys267 contribute to the ATP site. Residue Asp240 coordinates L-methionine. L-methionine is bound at residue Lys271.

This sequence belongs to the AdoMet synthase family. Homotetramer; dimer of dimers. Mg(2+) is required as a cofactor. K(+) serves as cofactor.

It localises to the cytoplasm. It catalyses the reaction L-methionine + ATP + H2O = S-adenosyl-L-methionine + phosphate + diphosphate. It functions in the pathway amino-acid biosynthesis; S-adenosyl-L-methionine biosynthesis; S-adenosyl-L-methionine from L-methionine: step 1/1. Functionally, catalyzes the formation of S-adenosylmethionine (AdoMet) from methionine and ATP. The overall synthetic reaction is composed of two sequential steps, AdoMet formation and the subsequent tripolyphosphate hydrolysis which occurs prior to release of AdoMet from the enzyme. The polypeptide is S-adenosylmethionine synthase 2 (Rhodospirillum rubrum (strain ATCC 11170 / ATH 1.1.1 / DSM 467 / LMG 4362 / NCIMB 8255 / S1)).